A 676-amino-acid chain; its full sequence is Zinc finger CCCH domain-containing protein 38 (676 aa).

Disordered stretches follow at residues 1 to 134 (MEMS…DHLF), 172 to 217 (SSDY…RSSN), 245 to 307 (RKQP…SWID), 487 to 506 (SVQP…NPNQ), and 533 to 594 (IQEV…DPKG). Residues 12-21 (SKWDSKEDTH) show a composition bias toward basic and acidic residues. The span at 58-79 (RVSQNNDNSYFSEQDGTRQQFV) shows a compositional bias: polar residues. Basic and acidic residues-rich tracts occupy residues 101–110 (ARRDAGSYDR), 124–134 (EFNKRGSDHLF), and 192–212 (SEFT…EGGF). A C3H1-type zinc finger spans residues 214–243 (RSSNIPCKFFAAGTGFCRNGKYCRFSHHVA). The span at 251-262 (NNNNFYRQDNNN) shows a compositional bias: low complexity. Residues 269–278 (KWNDVERLDN) show a composition bias toward basic and acidic residues. A compositionally biased stretch (basic and acidic residues) spans 538–562 (LDPKENGDKKTDEASKEEEGKKTGE). Acidic residues predominate over residues 563-583 (DTNDAENVVDEDEDGDDDGSD). Over residues 584-594 (EENKKEKDPKG) the composition is skewed to basic and acidic residues.

This chain is Zinc finger CCCH domain-containing protein 38, found in Arabidopsis thaliana (Mouse-ear cress).